Here is a 123-residue protein sequence, read N- to C-terminus: Large ribosomal subunit protein uL29 (123 aa).

This sequence belongs to the universal ribosomal protein uL29 family. As to quaternary structure, component of the large ribosomal subunit.

The protein resides in the cytoplasm. Its function is as follows. Component of the large ribosomal subunit. The ribosome is a large ribonucleoprotein complex responsible for the synthesis of proteins in the cell. This chain is Large ribosomal subunit protein uL29 (rpl35), found in Platichthys flesus (European flounder).